The primary structure comprises 413 residues: Patatin-like protein 3 (413 aa).

One can recognise a PNPLA domain in the interval 54 to 245 (LSVDGGARPE…ALGNPTAAAI (192 aa)). Residues 58–61 (GGAR) carry the GGXR motif. Ser-100 acts as the Nucleophile in catalysis. Residues 384-413 (EHGRRKQHVPPAASGGGGGGLDCHVSKKQP) form a disordered region.

It belongs to the patatin family.

In terms of biological role, possesses non-specific lipolytic acyl hydrolase (LAH) activity. Hydrolyzes phospholipids as well as galactolipids. May play a role in disease resistance. The polypeptide is Patatin-like protein 3 (PLP3) (Oryza sativa subsp. indica (Rice)).